Consider the following 316-residue polypeptide: KRR1 small subunit processome component (316 aa).

The 71-residue stretch at alanine 122–lysine 192 folds into the KH domain. Basic and acidic residues predominate over residues lysine 279–isoleucine 304. Residues lysine 279–asparagine 316 are disordered.

It belongs to the KRR1 family. Component of the ribosomal small subunit (SSU) processome composed of at least 40 protein subunits and snoRNA U3. Interacts with snoRNA U3. Interacts with MPP10, KRI1 and with ribosomal proteins RPS1A, RPS4A, RPS4B, RPS8A, RPS8B, RPS11A, RPS11B, RPS13, RPS24, RPS25, RPL4A, RPL7B, RPL8, RPL23, RPL25 and RPL28.

Its subcellular location is the nucleus. It is found in the nucleolus. Required for 40S ribosome biogenesis. Involved in nucleolar processing of pre-18S ribosomal RNA and ribosome assembly. Essential for vegetative growth. This is KRR1 small subunit processome component from Saccharomyces cerevisiae (strain RM11-1a) (Baker's yeast).